The chain runs to 322 residues: Ras-like protein 2 (322 aa).

GTP is bound by residues 20 to 25 (GVGKSA), 36 to 42 (VDEYDPT), 66 to 67 (AG), and 123 to 126 (NKSD). An Effector region motif is present at residues 39-47 (YDPTIEDSY). Lysine 131 is covalently cross-linked (Glycyl lysine isopeptide (Lys-Gly) (interchain with G-Cter in ubiquitin)). 153–155 (SAK) is a GTP binding site. A disordered region spans residues 178–322 (YNKTLTENDN…SGSGGCCIIS (145 aa)). Residues 180 to 205 (KTLTENDNSKQTSQDTKGSGANSVPR) are compositionally biased toward polar residues. A phosphoserine mark is found at serine 198, serine 202, serine 207, serine 214, serine 235, and serine 238. Positions 215-252 (NAANGKNVNSSTTVVNARNASIESKTGLAGNQATNGKT) are enriched in polar residues. Low complexity predominate over residues 261-284 (NSTGQAGQANAQSANTVNNRVNNN). Positions 285–294 (SKAGQVSNAK) are enriched in polar residues. Cysteine 318 carries S-palmitoyl cysteine lipidation. Residue cysteine 319 is modified to Cysteine methyl ester. Residue cysteine 319 is the site of S-farnesyl cysteine attachment. Residues 320–322 (IIS) constitute a propeptide, removed in mature form.

Belongs to the small GTPase superfamily. Ras family. In terms of processing, farnesylated by RAM1-RAM2, which is required for targeting RAS2 to the cytoplasmic site of the endoplasmic reticulum, where proteolytic processing of the C-terminus by RCE1 and methylation of the resulting carboxyl group by STE14 occurs. Palmitoylated by the ERF2-SHR5 complex, which is required for proper plasma membrane localization of RAS2.

The protein localises to the cell membrane. It carries out the reaction GTP + H2O = GDP + phosphate + H(+). Its activity is regulated as follows. Alternates between an inactive form bound to GDP and an active form bound to GTP. Activated by guanine nucleotide-exchange factor (GEF) CDC25 and inactivated by GTPase-activating proteins (GAPs) IRA1 and IRA2. In terms of biological role, the S.cerevisiae Ras proteins modulate the activity of the adenylate cyclase catalytic subunit and therefore affect the biosynthesis of cyclic-AMP. This is Ras-like protein 2 (RAS2) from Saccharomyces cerevisiae (strain ATCC 204508 / S288c) (Baker's yeast).